Consider the following 268-residue polypeptide: Glucosamine-6-phosphate deaminase (268 aa).

Aspartate 72 serves as the catalytic Proton acceptor; for enolization step. Aspartate 141 (for ring-opening step) is an active-site residue. The active-site Proton acceptor; for ring-opening step is histidine 143. The For ring-opening step role is filled by glutamate 148.

The protein belongs to the glucosamine/galactosamine-6-phosphate isomerase family. NagB subfamily. As to quaternary structure, homohexamer.

It carries out the reaction alpha-D-glucosamine 6-phosphate + H2O = beta-D-fructose 6-phosphate + NH4(+). The protein operates within amino-sugar metabolism; N-acetylneuraminate degradation; D-fructose 6-phosphate from N-acetylneuraminate: step 5/5. Its activity is regulated as follows. Allosterically activated by N-acetylglucosamine 6-phosphate (GlcNAc6P). Catalyzes the reversible isomerization-deamination of glucosamine 6-phosphate (GlcN6P) to form fructose 6-phosphate (Fru6P) and ammonium ion. The protein is Glucosamine-6-phosphate deaminase of Histophilus somni (strain 129Pt) (Haemophilus somnus).